A 555-amino-acid chain; its full sequence is MFQYLYYIWEEPISISLGNWLNIGDIIIPYGLSLDSLAMTVMIPVGIVTLCVLLYAIEYMSHDPNRNTFYIILSVFAIFMTILVVSDNYIMMFIGWEFVGVISYLLISFWSTRIAAMKAALSAILLNRMGDTFFMLALGIFLSYFHAVDFDTLSLAAPYTNTLILNILSLLLLLAATAKSAQLGLHAWLLQAMEGPTPVSALLHAATMVCAGVYVLVRSYFILEYAPSLLIGICWLGGVTTLVSGLIAIVTNDIKKVIALSTMSQLSIMVLAIGISSYDLAIYHLYCHAFFKALLFMGAGSVIHSYISETQDMRKYGGLVNYLPFSYTAILIASLSLMAIPGLTGYYSKDIIIESLYGTYTFSGYILYYMAVGSATLTSLYSIRVLYLTFYNNPNSNKATYQHIHENIRMLIPMIILVIYSIFIGFNRDNVIGHYAMSLPANNSFIETEFTLPWYIKLLPLILGLSLSLLLVYIYEYAYKVRPSSIYNYFNNKIYYDQLLNNVIIRKTLIFGGYLNTYIDNGLLKVLGSTGISRALTYINIGIFLNLLYLFFFYR.

15 helical membrane-spanning segments follow: residues 37–57 (LAMTVMIPVGIVTLCVLLYAI), 69–89 (FYIILSVFAIFMTILVVSDNY), 90–110 (IMMFIGWEFVGVISYLLISFW), 133–153 (FFMLALGIFLSYFHAVDFDTL), 155–175 (LAAPYTNTLILNILSLLLLLA), 197–217 (TPVSALLHAATMVCAGVYVLV), 230–250 (LIGICWLGGVTTLVSGLIAIV), 257–275 (VIALSTMSQLSIMVLAIGI), 287–307 (CHAFFKALLFMGAGSVIHSYI), 323–343 (LPFSYTAILIASLSLMAIPGL), 366–388 (ILYYMAVGSATLTSLYSIRVLYL), 406–426 (ENIRMLIPMIILVIYSIFIGF), 454–474 (WYIKLLPLILGLSLSLLLVYI), 494–516 (IYYDQLLNNVIIRKTLIFGGYLN), and 534–554 (RALTYINIGIFLNLLYLFFFY).

This sequence belongs to the complex I subunit 5 family.

It is found in the mitochondrion inner membrane. The enzyme catalyses a ubiquinone + NADH + 5 H(+)(in) = a ubiquinol + NAD(+) + 4 H(+)(out). In terms of biological role, core subunit of the mitochondrial membrane respiratory chain NADH dehydrogenase (Complex I) that is believed to belong to the minimal assembly required for catalysis. Complex I functions in the transfer of electrons from NADH to the respiratory chain. The immediate electron acceptor for the enzyme is believed to be ubiquinone. The chain is NADH-ubiquinone oxidoreductase chain 5 (ND5) from Candida parapsilosis (Yeast).